The chain runs to 1826 residues: Kinesin-like protein KIF13B (1826 aa).

The region spanning Lys-5–Ile-353 is the Kinesin motor domain. Gly-103–Ser-110 contributes to the ATP binding site. A coiled-coil region spans residues Asn-364–Ser-439. The region spanning Thr-471–Gly-535 is the FHA domain. The tract at residues Lys-546 to Ser-582 is disordered. Polar residues predominate over residues Ser-561–Gln-570. Coiled-coil stretches lie at residues Met-607 to Arg-710, Ser-752 to Glu-772, and Leu-1096 to Ala-1143. A Phosphoserine modification is found at Ser-661. Positions Glu-1367–Ser-1420 are disordered. Polar residues-rich tracts occupy residues Arg-1378–Arg-1392 and Glu-1409–Ser-1420. Ser-1379 is modified (phosphoserine). A Phosphoserine; by MARK2 modification is found at Ser-1381. Ser-1382 and Ser-1391 each carry phosphoserine. Ser-1410 carries the post-translational modification Phosphoserine; by MARK2. Phosphoserine is present on residues Ser-1432, Ser-1438, and Ser-1537. Phosphothreonine is present on Thr-1545. Ser-1559 is modified (phosphoserine). Low complexity predominate over residues Ser-1579–Ile-1607. Disordered regions lie at residues Ser-1579–Arg-1650 and Met-1662–Pro-1698. Residues Ser-1608 to Pro-1624 are compositionally biased toward pro residues. Ser-1644 carries the post-translational modification Phosphoserine. The segment covering Pro-1671 to Ala-1688 has biased composition (low complexity). Positions Gly-1721–Arg-1763 constitute a CAP-Gly domain. Ser-1797 bears the Phosphoserine mark.

The protein belongs to the TRAFAC class myosin-kinesin ATPase superfamily. Kinesin family. Binds to DLG1 and DLG4. Interacts (when phosphorylated at Ser-1381 and Ser-1410) with 14-3-3. Post-translationally, phosphorylated at Ser-1381 and Ser-1410 by MARK2, promoting interaction with 14-3-3 and inhibiting microtubule-dependent accumulation and formation of axons. As to expression, ubiquitous.

It is found in the cytoplasm. The protein localises to the cytoskeleton. Its subcellular location is the cell projection. The protein resides in the axon. Functionally, involved in reorganization of the cortical cytoskeleton. Regulates axon formation by promoting the formation of extra axons. May be functionally important for the intracellular trafficking of MAGUKs and associated protein complexes. The protein is Kinesin-like protein KIF13B (KIF13B) of Homo sapiens (Human).